Here is a 361-residue protein sequence, read N- to C-terminus: Chorismate synthase (361 aa).

The span at 38-49 shows a compositional bias: basic and acidic residues; the sequence is EKDMQHDLDRRR. Residues 38–58 are disordered; it reads EKDMQHDLDRRRPGTSKYTTQ. Residue Arg-48 participates in NADP(+) binding. Residues 125–127, 238–239, Gly-278, 293–297, and Arg-319 each bind FMN; these read RSS, NA, and KPTSS.

It belongs to the chorismate synthase family. As to quaternary structure, homotetramer. Requires FMNH2 as cofactor.

It carries out the reaction 5-O-(1-carboxyvinyl)-3-phosphoshikimate = chorismate + phosphate. It functions in the pathway metabolic intermediate biosynthesis; chorismate biosynthesis; chorismate from D-erythrose 4-phosphate and phosphoenolpyruvate: step 7/7. Catalyzes the anti-1,4-elimination of the C-3 phosphate and the C-6 proR hydrogen from 5-enolpyruvylshikimate-3-phosphate (EPSP) to yield chorismate, which is the branch point compound that serves as the starting substrate for the three terminal pathways of aromatic amino acid biosynthesis. This reaction introduces a second double bond into the aromatic ring system. The protein is Chorismate synthase of Photobacterium profundum (strain SS9).